The chain runs to 195 residues: uncharacterized protein (195 aa).

Transmembrane regions (helical) follow at residues 89 to 106 (SWIS…PLLP), 111 to 128 (HLPL…VWKR), 149 to 168 (VKIS…VLLL), and 172 to 194 (LNAL…FLNI).

The protein resides in the cell membrane. This is an uncharacterized protein from Bacillus subtilis (strain 168).